The following is an 81-amino-acid chain: Conotoxin Im6.1 (81 aa).

Residues 1–20 (MSKLGVVLFTLLLLVPLVTP) form the signal peptide. A propeptide spanning residues 21–47 (ERDGGKWTMLAKNKKAMKRNLMDFITR) is cleaved from the precursor. Intrachain disulfides connect cysteine 49–cysteine 61, cysteine 54–cysteine 67, and cysteine 60–cysteine 76.

This sequence belongs to the conotoxin M superfamily. In terms of tissue distribution, expressed by the venom duct.

The protein localises to the secreted. In Conus imperialis (Imperial cone), this protein is Conotoxin Im6.1.